A 312-amino-acid chain; its full sequence is DNA-directed RNA polymerase subunit alpha (312 aa).

Positions 1-226 (MIEFEKPIIT…EHLNLFTDLT (226 aa)) are alpha N-terminal domain (alpha-NTD). The interval 243–312 (DEKVLDRTIE…DLGLGLKNDK (70 aa)) is alpha C-terminal domain (alpha-CTD).

This sequence belongs to the RNA polymerase alpha chain family. Homodimer. The RNAP catalytic core consists of 2 alpha, 1 beta, 1 beta' and 1 omega subunit. When a sigma factor is associated with the core the holoenzyme is formed, which can initiate transcription.

It catalyses the reaction RNA(n) + a ribonucleoside 5'-triphosphate = RNA(n+1) + diphosphate. Functionally, DNA-dependent RNA polymerase catalyzes the transcription of DNA into RNA using the four ribonucleoside triphosphates as substrates. The protein is DNA-directed RNA polymerase subunit alpha of Streptococcus pyogenes serotype M1.